The sequence spans 343 residues: MLNDTTSKDYEYEYDQEQYSDLLNVPVDCPAGNCFSNDAYLIVLLGLYSVIFLVGVPGNTLLAWVTWKESRHRLGASWFLHLTMADLLCCVSLPFLAVPIAQKGHWPYGTAGCWLLSSITVLSMYASVLLLTGLSGDLFLLAFRPSWKNADQRTCGVRVVQVSSWMLALLLTVPGAVYRKLLQEHYPPRLVCGTNYGGSVTAEVTITTVRFLFGFLVPLVFMASCHGILQRQMARRHWPLGTAVVVGFFICWTPFHLLRVIIAVASSHSPLLAWALEAEPLVTGLALAHSALNPIMFLYFGRKQLCKSLQAACHWALRDLQDEEESAVTKVSTSQEMVSEMPV.

The Extracellular portion of the chain corresponds to 1 to 44; it reads MLNDTTSKDYEYEYDQEQYSDLLNVPVDCPAGNCFSNDAYLIVL. Asparagine 3 is a glycosylation site (N-linked (GlcNAc...) asparagine). The helical transmembrane segment at 45 to 67 threads the bilayer; the sequence is LGLYSVIFLVGVPGNTLLAWVTW. Over 68-78 the chain is Cytoplasmic; it reads KESRHRLGASW. A helical membrane pass occupies residues 79–101; that stretch reads FLHLTMADLLCCVSLPFLAVPIA. The Extracellular segment spans residues 102 to 120; the sequence is QKGHWPYGTAGCWLLSSIT. Cysteine 113 and cysteine 192 form a disulfide bridge. The helical transmembrane segment at 121 to 143 threads the bilayer; it reads VLSMYASVLLLTGLSGDLFLLAF. The Cytoplasmic segment spans residues 144-155; that stretch reads RPSWKNADQRTC. The chain crosses the membrane as a helical span at residues 156-178; that stretch reads GVRVVQVSSWMLALLLTVPGAVY. Topologically, residues 179–208 are extracellular; that stretch reads RKLLQEHYPPRLVCGTNYGGSVTAEVTITT. Residues 209–231 traverse the membrane as a helical segment; the sequence is VRFLFGFLVPLVFMASCHGILQR. Over 232–243 the chain is Cytoplasmic; the sequence is QMARRHWPLGTA. A helical membrane pass occupies residues 244–266; that stretch reads VVVGFFICWTPFHLLRVIIAVAS. The Extracellular segment spans residues 267-280; that stretch reads SHSPLLAWALEAEP. The chain crosses the membrane as a helical span at residues 281–300; the sequence is LVTGLALAHSALNPIMFLYF. The Cytoplasmic portion of the chain corresponds to 301 to 343; that stretch reads GRKQLCKSLQAACHWALRDLQDEEESAVTKVSTSQEMVSEMPV. The residue at position 326 (serine 326) is a Phosphoserine.

This sequence belongs to the G-protein coupled receptor 1 family. In terms of assembly, interacts with C3 (the anaphylatoxin peptide C3a and the adipogenic hormone ASP); the interaction occurs with higher affinity for ASP, enhancing the phosphorylation and activation of GPR77, recruitment of ARRB2 to the cell surface and endocytosis of GRP77.

Its subcellular location is the cell membrane. Functionally, receptor for the chemotactic and inflammatory C3a, C4a and C5a anaphylatoxin peptides and also for their dearginated forms ASP/C3adesArg, C4adesArg and C5adesArg respectively. Couples weakly to G(i)-mediated signaling pathways. The polypeptide is C5a anaphylatoxin chemotactic receptor 2 (C5ar2) (Rattus norvegicus (Rat)).